The following is a 458-amino-acid chain: UDP-N-acetylmuramate--L-alanine ligase (458 aa).

118–124 (GTHGKTT) lines the ATP pocket.

Belongs to the MurCDEF family.

The protein localises to the cytoplasm. The catalysed reaction is UDP-N-acetyl-alpha-D-muramate + L-alanine + ATP = UDP-N-acetyl-alpha-D-muramoyl-L-alanine + ADP + phosphate + H(+). It functions in the pathway cell wall biogenesis; peptidoglycan biosynthesis. Cell wall formation. The chain is UDP-N-acetylmuramate--L-alanine ligase from Clostridium botulinum (strain Okra / Type B1).